The following is a 224-amino-acid chain: Probable GTP-binding protein EngB (224 aa).

One can recognise an EngB-type G domain in the interval 27–201; it reads SGIEVAFAGR…DAIICQWLEQ (175 aa). Residues 35-42, 62-66, 80-83, 147-150, and 180-182 contribute to the GTP site; these read GRSNAGKS, GRTQL, DLPG, TKCD, and FSS. Mg(2+) contacts are provided by serine 42 and threonine 64. Positions 205 to 224 are disordered; sequence EYELPEEDDFDDSDEFTEEE.

This sequence belongs to the TRAFAC class TrmE-Era-EngA-EngB-Septin-like GTPase superfamily. EngB GTPase family. Mg(2+) is required as a cofactor.

Functionally, necessary for normal cell division and for the maintenance of normal septation. In Colwellia psychrerythraea (strain 34H / ATCC BAA-681) (Vibrio psychroerythus), this protein is Probable GTP-binding protein EngB.